The chain runs to 173 residues: Sterile alpha motif domain-containing protein 5 (173 aa).

The SAM domain occupies 1-65 (MCTNIVYEWL…LEAVRRLREQ (65 aa)). The disordered stretch occupies residues 75-119 (TLEPQPAPPGPPADAVPTGRRGEPCGGPAQGTRGDSRGHTTAPRS). Over residues 79 to 88 (QPAPPGPPAD) the composition is skewed to pro residues.

Interacts promiscuously (via SAM domain) with EPHA5, EPHA6, EPHA7, EPHA8, EPHB1, EPHB2, EPHB3 and EPHB4 (via SAM domain) (in vitro). Detected in biliary epithelial cells on bile ducts at the hepatic hilum (at protein level).

Its subcellular location is the cytoplasm. This chain is Sterile alpha motif domain-containing protein 5 (SAMD5), found in Homo sapiens (Human).